A 1178-amino-acid polypeptide reads, in one-letter code: DNA-directed RNA polymerase subunit beta (1178 aa).

The tract at residues 1-37 (MLEGCILADSRQSKTAASPSPSRPQSSSNNSVPGAPN) is disordered. Residues 18-33 (SPSPSRPQSSSNNSVP) show a composition bias toward low complexity.

Belongs to the RNA polymerase beta chain family. The RNAP catalytic core consists of 2 alpha, 1 beta, 1 beta' and 1 omega subunit. When a sigma factor is associated with the core the holoenzyme is formed, which can initiate transcription.

It catalyses the reaction RNA(n) + a ribonucleoside 5'-triphosphate = RNA(n+1) + diphosphate. Functionally, DNA-dependent RNA polymerase catalyzes the transcription of DNA into RNA using the four ribonucleoside triphosphates as substrates. The sequence is that of DNA-directed RNA polymerase subunit beta from Mycobacterium tuberculosis (strain CDC 1551 / Oshkosh).